The following is a 385-amino-acid chain: Cell division protein FtsZ (385 aa).

GTP is bound by residues 37–41 (GGGSN), 125–127 (GTG), Glu-156, Lys-160, and Asp-204.

The protein belongs to the FtsZ family. As to quaternary structure, homodimer. Polymerizes to form a dynamic ring structure in a strictly GTP-dependent manner. Interacts directly with several other division proteins.

Its subcellular location is the cytoplasm. Functionally, essential cell division protein that forms a contractile ring structure (Z ring) at the future cell division site. The regulation of the ring assembly controls the timing and the location of cell division. One of the functions of the FtsZ ring is to recruit other cell division proteins to the septum to produce a new cell wall between the dividing cells. Binds GTP and shows GTPase activity. In Helicobacter pylori (strain ATCC 700392 / 26695) (Campylobacter pylori), this protein is Cell division protein FtsZ.